The sequence spans 481 residues: Glycogen synthase (481 aa).

Residue Lys16 coordinates ADP-alpha-D-glucose.

Belongs to the glycosyltransferase 1 family. Bacterial/plant glycogen synthase subfamily.

The enzyme catalyses [(1-&gt;4)-alpha-D-glucosyl](n) + ADP-alpha-D-glucose = [(1-&gt;4)-alpha-D-glucosyl](n+1) + ADP + H(+). It participates in glycan biosynthesis; glycogen biosynthesis. In terms of biological role, synthesizes alpha-1,4-glucan chains using ADP-glucose. This Lacticaseibacillus casei (strain BL23) (Lactobacillus casei) protein is Glycogen synthase.